A 199-amino-acid polypeptide reads, in one-letter code: Inactive glutathione S-transferase D3 (199 aa).

Residues 1 to 64 (MVGKALGLEF…YLVEKYGKDD (64 aa)) form the GST N-terminal domain. Glutathione contacts are provided by residues 34-36 (HSI) and 48-50 (ESR). The region spanning 70–199 (DIQKQAVINQ…RIEEKQNAAK (130 aa)) is the GST C-terminal domain.

It belongs to the GST superfamily. Delta family. Homodimer.

Its function is as follows. Has no glutathione S-transferase activity. In Drosophila melanogaster (Fruit fly), this protein is Inactive glutathione S-transferase D3.